Here is a 217-residue protein sequence, read N- to C-terminus: Translation initiation factor 6 (217 aa).

This sequence belongs to the eIF-6 family.

Binds to the 50S ribosomal subunit and prevents its association with the 30S ribosomal subunit to form the 70S initiation complex. This Methanococcoides burtonii (strain DSM 6242 / NBRC 107633 / OCM 468 / ACE-M) protein is Translation initiation factor 6.